We begin with the raw amino-acid sequence, 246 residues long: DNA repair protein RecO (246 aa).

It belongs to the RecO family.

In terms of biological role, involved in DNA repair and RecF pathway recombination. In Methylorubrum populi (strain ATCC BAA-705 / NCIMB 13946 / BJ001) (Methylobacterium populi), this protein is DNA repair protein RecO.